The primary structure comprises 89 residues: MKAVFAILFLAFIALTYAKSYDEVKEEIKNEVEREIFEDLEEESDELDNYVEESNDAKPWRRWRRAVRRIRWRKVVPYIPAIVRAAGKK.

Positions 1 to 18 (MKAVFAILFLAFIALTYA) are cleaved as a signal peptide. A propeptide spanning residues 19–57 (KSYDEVKEEIKNEVEREIFEDLEEESDELDNYVEESNDA) is cleaved from the precursor. Position 86 is an alanine amide (A86).

The protein belongs to the arminin family. Expressed in entodermal epithelium along the body column.

It is found in the secreted. Its subcellular location is the target cell membrane. Its function is as follows. Antimicrobial peptide with a broad-spectrum antimicrobial activity. Keeps its antibacterial activity under a wide range of salt concentrations that mimic physiological conditions of human blood, which is surprising, since Hydra is an obligate freshwater animal with nearly no salt tolerance. Does not affect red blood cells. In Hydra oligactis (Brown hydra), this protein is Arminin 375.